A 62-amino-acid polypeptide reads, in one-letter code: Small ribosomal subunit protein bS21C (62 aa).

The segment at Glu43 to Thr62 is disordered. Basic residues predominate over residues Ser45 to Thr62.

It belongs to the bacterial ribosomal protein bS21 family.

The protein is Small ribosomal subunit protein bS21C of Trichormus variabilis (strain ATCC 29413 / PCC 7937) (Anabaena variabilis).